A 431-amino-acid chain; its full sequence is Serine hydroxymethyltransferase (431 aa).

Residues Leu127 and 131-133 (GHL) each bind (6S)-5,6,7,8-tetrahydrofolate. Residue Lys236 is modified to N6-(pyridoxal phosphate)lysine.

It belongs to the SHMT family. In terms of assembly, homodimer. Pyridoxal 5'-phosphate serves as cofactor.

The protein resides in the cytoplasm. The enzyme catalyses (6R)-5,10-methylene-5,6,7,8-tetrahydrofolate + glycine + H2O = (6S)-5,6,7,8-tetrahydrofolate + L-serine. It functions in the pathway one-carbon metabolism; tetrahydrofolate interconversion. It participates in amino-acid biosynthesis; glycine biosynthesis; glycine from L-serine: step 1/1. Functionally, catalyzes the reversible interconversion of serine and glycine with tetrahydrofolate (THF) serving as the one-carbon carrier. This reaction serves as the major source of one-carbon groups required for the biosynthesis of purines, thymidylate, methionine, and other important biomolecules. Also exhibits THF-independent aldolase activity toward beta-hydroxyamino acids, producing glycine and aldehydes, via a retro-aldol mechanism. In Granulibacter bethesdensis (strain ATCC BAA-1260 / CGDNIH1), this protein is Serine hydroxymethyltransferase.